The following is a 272-amino-acid chain: Tryptophan synthase alpha chain (272 aa).

Residues E49 and E60 each act as proton acceptor in the active site.

The protein belongs to the TrpA family. In terms of assembly, tetramer of two alpha and two beta chains.

It carries out the reaction (1S,2R)-1-C-(indol-3-yl)glycerol 3-phosphate + L-serine = D-glyceraldehyde 3-phosphate + L-tryptophan + H2O. The protein operates within amino-acid biosynthesis; L-tryptophan biosynthesis; L-tryptophan from chorismate: step 5/5. Its function is as follows. The alpha subunit is responsible for the aldol cleavage of indoleglycerol phosphate to indole and glyceraldehyde 3-phosphate. The sequence is that of Tryptophan synthase alpha chain from Legionella pneumophila (strain Paris).